Consider the following 616-residue polypeptide: Nucleoprotein (616 aa).

Short sequence motifs (nuclear localization signal) lie at residues 230–233 (RPKR) and 473–476 (KPKK).

In terms of assembly, homomultimerizes to form the nucleocapsid. Binds to viral genomic RNA. Protein-RNA contacts are mediated by a combination of electrostatic interactions between positively charged residues and the phosphate backbone and planar interactions between aromatic side chains and bases.

It localises to the virion. It is found in the host nucleus. The protein localises to the host nucleolus. Functionally, encapsidates the negative strand viral RNA, protecting it from nucleases. The encapsidated genomic RNA is termed the ribonucleoprotein (RNP) and serves as template for transcription and replication. The sequence is that of Nucleoprotein from Gadus morhua (Atlantic cod).